The following is a 238-amino-acid chain: Aspartate/glutamate leucyltransferase (238 aa).

The protein belongs to the R-transferase family. Bpt subfamily.

The protein localises to the cytoplasm. The enzyme catalyses N-terminal L-glutamyl-[protein] + L-leucyl-tRNA(Leu) = N-terminal L-leucyl-L-glutamyl-[protein] + tRNA(Leu) + H(+). It catalyses the reaction N-terminal L-aspartyl-[protein] + L-leucyl-tRNA(Leu) = N-terminal L-leucyl-L-aspartyl-[protein] + tRNA(Leu) + H(+). Functions in the N-end rule pathway of protein degradation where it conjugates Leu from its aminoacyl-tRNA to the N-termini of proteins containing an N-terminal aspartate or glutamate. The chain is Aspartate/glutamate leucyltransferase from Shewanella oneidensis (strain ATCC 700550 / JCM 31522 / CIP 106686 / LMG 19005 / NCIMB 14063 / MR-1).